A 323-amino-acid polypeptide reads, in one-letter code: Glyoxylate/hydroxypyruvate reductase B (323 aa).

Active-site residues include arginine 237 and glutamate 266. The active-site Proton donor is histidine 285.

The protein belongs to the D-isomer specific 2-hydroxyacid dehydrogenase family. GhrB subfamily. Homodimer.

It localises to the cytoplasm. It catalyses the reaction glycolate + NADP(+) = glyoxylate + NADPH + H(+). The catalysed reaction is (R)-glycerate + NAD(+) = 3-hydroxypyruvate + NADH + H(+). The enzyme catalyses (R)-glycerate + NADP(+) = 3-hydroxypyruvate + NADPH + H(+). Catalyzes the NADPH-dependent reduction of glyoxylate and hydroxypyruvate into glycolate and glycerate, respectively. This Klebsiella pneumoniae subsp. pneumoniae (strain ATCC 700721 / MGH 78578) protein is Glyoxylate/hydroxypyruvate reductase B.